We begin with the raw amino-acid sequence, 217 residues long: Probable transaldolase (217 aa).

Lys-83 acts as the Schiff-base intermediate with substrate in catalysis.

Belongs to the transaldolase family. Type 3B subfamily.

The protein resides in the cytoplasm. The enzyme catalyses D-sedoheptulose 7-phosphate + D-glyceraldehyde 3-phosphate = D-erythrose 4-phosphate + beta-D-fructose 6-phosphate. The protein operates within carbohydrate degradation; pentose phosphate pathway; D-glyceraldehyde 3-phosphate and beta-D-fructose 6-phosphate from D-ribose 5-phosphate and D-xylulose 5-phosphate (non-oxidative stage): step 2/3. Its function is as follows. Transaldolase is important for the balance of metabolites in the pentose-phosphate pathway. The sequence is that of Probable transaldolase from Bartonella tribocorum (strain CIP 105476 / IBS 506).